Here is a 492-residue protein sequence, read N- to C-terminus: MSLLMISENVKLAREYALLGNYDSAMVYYQGVLDQMNKYLYSVKDTFLQQKWQQVWQEINMEAKHVKDIMSTLEGFKLDNSPVKTTQHEFPAHDGEVWSLPVPVERRPSPGPRKRQSVQCNDNKSHNNRFGAGKGPNLPSSKNTNNVKMKPVRAREKKDTFLKVKDEKNKSSVDVSETEVKKFDGTGYDKDLIEALERDIISQNPNIRWDDIADLEEAKKLLKEAVVLPMWMPEFFKGIRRPWKGVLMVGPPGTGKTLLAKAVATECKTTFFNISSSTLTSKYRGESEKLVRLLFEMARFYAPTTIFIDEIDSICSRRGTSEEHEASRRVKAELLVQMDGVGGASENEDPSKMVMVLAATNFPWDIDEALRRRLEKRIYIPLPSAKGREELLRINLKELELADDVNIECIAENMDGYSGADITNVCRDASLMAMRRRIEGLTPEEIRNLSRDDMHMPTTMEDFEMALKKVSKSVSASDIEKYEKWIEEFGSC.

Positions 91 to 158 are disordered; the sequence is PAHDGEVWSL…MKPVRAREKK (68 aa). Residues 138–147 show a composition bias toward polar residues; that stretch reads LPSSKNTNNV. 250-257 is an ATP binding site; the sequence is GPPGTGKT.

Belongs to the AAA ATPase family. Katanin p60 subunit A1 subfamily. As to quaternary structure, can homooligomerize into hexameric rings, which may be promoted by interaction with microtubules. Interacts with katnb1, which may serve as a targeting subunit.

It localises to the cytoplasm. The protein resides in the cytoskeleton. Its subcellular location is the microtubule organizing center. The protein localises to the centrosome. It is found in the spindle pole. It localises to the spindle. The catalysed reaction is n ATP + n H2O + a microtubule = n ADP + n phosphate + (n+1) alpha/beta tubulin heterodimers.. With respect to regulation, ATPase activity is stimulated by microtubules, which promote homooligomerization. ATP-dependent microtubule severing is stimulated by interaction with katnb1. In terms of biological role, catalytic subunit of a complex which severs microtubules in an ATP-dependent manner. Microtubule severing may promote rapid reorganization of cellular microtubule arrays and the release of microtubules from the centrosome following nucleation. This is Katanin p60 ATPase-containing subunit A1 (katna1) from Xenopus tropicalis (Western clawed frog).